Consider the following 150-residue polypeptide: Aspartate 1-decarboxylase 1 (150 aa).

Residue Ser24 is the Schiff-base intermediate with substrate; via pyruvic acid of the active site. A Pyruvic acid (Ser) modification is found at Ser24. Residue Thr56 coordinates substrate. Catalysis depends on Tyr57, which acts as the Proton donor. A substrate-binding site is contributed by 72–74; sequence GAA.

The protein belongs to the PanD family. Heterooctamer of four alpha and four beta subunits. Pyruvate is required as a cofactor. In terms of processing, is synthesized initially as an inactive proenzyme, which is activated by self-cleavage at a specific serine bond to produce a beta-subunit with a hydroxyl group at its C-terminus and an alpha-subunit with a pyruvoyl group at its N-terminus.

It is found in the cytoplasm. It catalyses the reaction L-aspartate + H(+) = beta-alanine + CO2. It participates in cofactor biosynthesis; (R)-pantothenate biosynthesis; beta-alanine from L-aspartate: step 1/1. Its function is as follows. Catalyzes the pyruvoyl-dependent decarboxylation of aspartate to produce beta-alanine. This is Aspartate 1-decarboxylase 1 from Mesorhizobium japonicum (strain LMG 29417 / CECT 9101 / MAFF 303099) (Mesorhizobium loti (strain MAFF 303099)).